A 711-amino-acid chain; its full sequence is Acyl-CoA dehydrogenase FadE34 (711 aa).

The protein belongs to the acyl-CoA dehydrogenase family. Homodimer. It depends on FAD as a cofactor.

The enzyme catalyses 3-oxochol-4-en-24-oyl-CoA + A = (22E)-3-oxochola-4,22-dien-24-oyl-CoA + AH2. It carries out the reaction 3beta-hydroxy-chol-5-ene-24-oyl-CoA + A = 3beta-hydroxy-chol-5,22-dien-24-oyl-CoA + AH2. It participates in steroid metabolism; cholesterol degradation. Its function is as follows. Involved in the second cycle of side chain dehydrogenation in the beta-oxidation of cholesterol catabolism. It contributes partly to the virulence by increasing the efficiency of beta-oxidation. Catalyzes the dehydrogenation of the five-carbon steroid side chain of 3-oxo-chol-4-en-24-oyl-CoA (3-OCO-CoA) to yield 3-oxochol-4,22-dien-24-oyl-CoA. Can also use 3beta-hydroxy-chol-5-ene-24-oyl-CoA, and shows weak activity with cholyl-CoA and deoxycholyl-CoA. The polypeptide is Acyl-CoA dehydrogenase FadE34 (fadE34) (Mycobacterium tuberculosis (strain ATCC 25618 / H37Rv)).